The chain runs to 1240 residues: Phospholipid-transporting ATPase 6 (1240 aa).

Over 1–75 (MARRRIRSRI…TTRYNLLTFL (75 aa)) the chain is Cytoplasmic. Residues 76-97 (PKCLYEQFHRVANFYFLVAAIL) form a helical membrane-spanning segment. Residues 98-101 (SVFP) are Extracellular-facing. A helical transmembrane segment spans residues 102–124 (LSPFNKWSMIAPLVFVVGLSMGK). Topologically, residues 125–306 (EALEDWRRFM…SRIEKRMDYI (182 aa)) are cytoplasmic. The helical transmembrane segment at 307–328 (IYTLFALLLTVSFISSLGFAVM) threads the bilayer. Residues 329–360 (TKLLMAEWWYLRPDKPESLTNPTNPLYAWVVH) lie on the Extracellular side of the membrane. Residues 361 to 378 (LITALLLYGYLIPISLYV) form a helical membrane-spanning segment. Over 379 to 943 (SIEVVKVLQA…HGHWCYKRIA (565 aa)) the chain is Cytoplasmic. The 4-aspartylphosphate intermediate role is filled by Asp-426. A Glycyl lysine isopeptide (Lys-Gly) (interchain with G-Cter in ubiquitin) cross-link involves residue Lys-625. Asp-888 and Asp-892 together coordinate Mg(2+). The chain crosses the membrane as a helical span at residues 944–963 (QMICYFFYKNITFGLTLFYF). Residues 964 to 977 (ECFTGFSGQSIYND) are Extracellular-facing. The helical transmembrane segment at 978–997 (SYLLLFNVVLTSLPVISLGV) threads the bilayer. The Cytoplasmic segment spans residues 998 to 1027 (FEQDVPSDVCLQFPALYQQGPKNLFFDWYR). The helical transmembrane segment at 1028–1050 (ILGWMGNGVYASIVIFTLNLGIF) threads the bilayer. Residues 1051–1063 (HVQSFRSDGQTAD) are Extracellular-facing. A helical transmembrane segment spans residues 1064–1086 (MNAMGTAMFTCIIWAVNVQIALT). The Cytoplasmic portion of the chain corresponds to 1087–1092 (MSHFTW). Residues 1093–1113 (IQHVMIWGSIGAWYVFLALYG) traverse the membrane as a helical segment. Over 1114-1130 (MLPVKLSGNIFHMLVEI) the chain is Extracellular. Residues 1131–1155 (LAPAPIFWLTSLLVIAATTLPYLFH) form a helical membrane-spanning segment. Topologically, residues 1156–1240 (ISYQRSVNPL…SNDTPSSNSQ (85 aa)) are cytoplasmic.

It belongs to the cation transport ATPase (P-type) (TC 3.A.3) family. Type IV subfamily.

It is found in the cell membrane. It localises to the endomembrane system. It catalyses the reaction ATP + H2O + phospholipidSide 1 = ADP + phosphate + phospholipidSide 2.. Involved in transport of phospholipids and in regulation of pollen plasma membrane lipid asymmetry. The chain is Phospholipid-transporting ATPase 6 from Arabidopsis thaliana (Mouse-ear cress).